The following is a 729-amino-acid chain: Polyribonucleotide nucleotidyltransferase (729 aa).

Mg(2+) contacts are provided by Asp-485 and Asp-491. The KH domain occupies 552–611; it reads PRITTMKVAEDKIRTIIGKGGATIKGLIESTGVSIDIDDSGVVQLFSPDKMALEEAQKQI. The region spanning 621-689 is the S1 motif domain; sequence GQTYQGKVSK…KQGRVKLEWK (69 aa).

The protein belongs to the polyribonucleotide nucleotidyltransferase family. In terms of assembly, component of the RNA degradosome, which is a multiprotein complex involved in RNA processing and mRNA degradation. It depends on Mg(2+) as a cofactor.

It is found in the cytoplasm. It carries out the reaction RNA(n+1) + phosphate = RNA(n) + a ribonucleoside 5'-diphosphate. Involved in mRNA degradation. Catalyzes the phosphorolysis of single-stranded polyribonucleotides processively in the 3'- to 5'-direction. The polypeptide is Polyribonucleotide nucleotidyltransferase (Legionella pneumophila subsp. pneumophila (strain Philadelphia 1 / ATCC 33152 / DSM 7513)).